The following is a 117-amino-acid chain: Replication initiation control protein YabA (117 aa).

Zn(2+)-binding residues include His-87, Cys-89, Cys-103, and Cys-106.

It belongs to the YabA family. As to quaternary structure, homotetramer. Interacts with both DnaA and DnaN, acting as a bridge between these two proteins. It depends on Zn(2+) as a cofactor.

It localises to the cytoplasm. Its subcellular location is the nucleoid. Involved in control of chromosome replication initiation. Inhibits the cooperative binding of DnaA to the oriC region, thus negatively regulating initiation of chromosome replication. Inhibits the ability of DnaA-ATP to form a helix on DNA; does not disassemble preformed DnaA-DNA helices. Decreases the residence time of DnaA on the chromosome at its binding sites (oriC, replication forks and promoter-binding sites). Tethers DnaA to the replication machinery via the DNA polymerase beta sliding clamp subunit (dnaN). Associates with oriC and other DnaA targets on the chromosome in a DnaA-dependent manner. The sequence is that of Replication initiation control protein YabA from Latilactobacillus sakei subsp. sakei (strain 23K) (Lactobacillus sakei subsp. sakei).